A 308-amino-acid polypeptide reads, in one-letter code: MGQKFNHGVLFYHEHSGLKDIYEGLGEVTKSLTTMCKHLSIQLSENEGDIIKYCERIKNQEYSSDVDIVFILGGDGTVNELVNGVLANDLNVPIGIIPGGTFNDFTKTLNLNPNFSKASEQLKTSHLESYDVMKVNGTYVLNFVGLGLIVQNAENVQEGRKDIFGKLSYVGSTVKTLMNPEDFDYTLTVDDKELNGNTSMLVVANGPNIGGSRIPLMDLSPQDGKLNSFIFDKQSFTILNDVFKKRDSMDWNEITNGIDHIAGKHITLSTDPVMKVDIDGEISLETPITIEVLPKALQILTFPENAEQ.

The DAGKc domain occupies 1 to 139 (MGQKFNHGVL…YDVMKVNGTY (139 aa)). ATP is bound by residues Ser44, 74–80 (GDGTVNE), and Thr101. Residues Ser220, Asp223, and Lys225 each contribute to the Mg(2+) site. The Proton acceptor role is filled by Glu281.

Belongs to the diacylglycerol/lipid kinase family. It depends on Mg(2+) as a cofactor.

May catalyze the ATP-dependent phosphorylation of lipids other than diacylglycerol (DAG). This is Putative lipid kinase SH2167 from Staphylococcus haemolyticus (strain JCSC1435).